Reading from the N-terminus, the 223-residue chain is Urease accessory protein UreF (223 aa).

This sequence belongs to the UreF family. In terms of assembly, ureD, UreF and UreG form a complex that acts as a GTP-hydrolysis-dependent molecular chaperone, activating the urease apoprotein by helping to assemble the nickel containing metallocenter of UreC. The UreE protein probably delivers the nickel.

It localises to the cytoplasm. In terms of biological role, required for maturation of urease via the functional incorporation of the urease nickel metallocenter. This is Urease accessory protein UreF from Rhizobium etli (strain ATCC 51251 / DSM 11541 / JCM 21823 / NBRC 15573 / CFN 42).